A 301-amino-acid chain; its full sequence is tRNA pseudouridine synthase B (301 aa).

Catalysis depends on D38, which acts as the Nucleophile.

It belongs to the pseudouridine synthase TruB family. Type 1 subfamily.

It catalyses the reaction uridine(55) in tRNA = pseudouridine(55) in tRNA. In terms of biological role, responsible for synthesis of pseudouridine from uracil-55 in the psi GC loop of transfer RNAs. This chain is tRNA pseudouridine synthase B, found in Clostridioides difficile (strain 630) (Peptoclostridium difficile).